A 695-amino-acid polypeptide reads, in one-letter code: Probable glutamine--tRNA ligase (695 aa).

The 'HIGH' region signature appears at 201-211 (PEPNGILHIGH). ATP is bound by residues 202 to 204 (EPN) and 208 to 214 (HIGHAKA). Residues Asp234 and Tyr391 each contribute to the L-glutamine site. Residues Thr410, 439 to 440 (RL), and 447 to 449 (LSK) contribute to the ATP site. Positions 446 to 450 (VLSKR) match the 'KMSKS' region motif.

It belongs to the class-I aminoacyl-tRNA synthetase family.

The catalysed reaction is tRNA(Gln) + L-glutamine + ATP = L-glutaminyl-tRNA(Gln) + AMP + diphosphate. This is Probable glutamine--tRNA ligase from Vairimorpha ceranae (strain BRL01) (Microsporidian parasite).